Reading from the N-terminus, the 1054-residue chain is DIS3-like exonuclease 1 (1054 aa).

Residues 236–313 (AGIKSGRYIQ…WKGRTAALCE (78 aa)) enclose the CSD1 domain. The tract at residues 313–332 (ENDSEDKASGESPSEPMPTG) is disordered. In terms of domain architecture, CSD2 spans 365–431 (ILVTPWDYRI…GEIATILVEN (67 aa)). An RNB domain is found at 465 to 816 (RRDLRSTHLV…VHRLLMAAIS (352 aa)). The residue at position 989 (serine 989) is a Phosphoserine.

Belongs to the RNR ribonuclease family. Component of the RNA exosome complex. The catalytically inactive RNA exosome core (Exo-9) complex is believed to associate with catalytic subunits EXOSC10, and DIS3 or DIS3L in cytoplasmic- and nuclear-specific RNA exosome complex forms. It depends on Mg(2+) as a cofactor.

It localises to the cytoplasm. It catalyses the reaction Exonucleolytic cleavage in the 3'- to 5'-direction to yield nucleoside 5'-phosphates.. Its function is as follows. Catalytic component of the RNA exosome complex which has 3'-&gt;5' exoribonuclease activity and participates in a multitude of cellular RNA processing and degradation events. In the cytoplasm, the RNA exosome complex is involved in general mRNA turnover and specifically degrades inherently unstable mRNAs containing AU-rich elements (AREs) within their 3' untranslated regions, and in RNA surveillance pathways, preventing translation of aberrant mRNAs. It seems to be involved in degradation of histone mRNA. The protein is DIS3-like exonuclease 1 (Dis3l) of Rattus norvegicus (Rat).